The following is a 340-amino-acid chain: Selenide, water dikinase (340 aa).

Residue Sec17 is part of the active site. A non-standard amino acid (selenocysteine) is located at residue Sec17. Residues Lys20 and 45–47 (NNE) each bind ATP. Asp48 lines the Mg(2+) pocket. ATP is bound by residues Asp65, Asp88, and 136 to 138 (GHT). Mg(2+) is bound at residue Asp88. Asp224 is a binding site for Mg(2+).

The protein belongs to the selenophosphate synthase 1 family. Class I subfamily. As to quaternary structure, homodimer. The cofactor is Mg(2+).

The enzyme catalyses hydrogenselenide + ATP + H2O = selenophosphate + AMP + phosphate + 2 H(+). Functionally, synthesizes selenophosphate from selenide and ATP. The sequence is that of Selenide, water dikinase from Campylobacter jejuni subsp. jejuni serotype O:2 (strain ATCC 700819 / NCTC 11168).